Consider the following 171-residue polypeptide: 6,7-dimethyl-8-ribityllumazine synthase (171 aa).

Residues F30, 64-66, and 88-90 contribute to the 5-amino-6-(D-ribitylamino)uracil site; these read ALE and AVI. (2S)-2-hydroxy-3-oxobutyl phosphate is bound at residue 93-94; that stretch reads ET. H96 (proton donor) is an active-site residue. N121 lines the 5-amino-6-(D-ribitylamino)uracil pocket. Residue R135 coordinates (2S)-2-hydroxy-3-oxobutyl phosphate.

Belongs to the DMRL synthase family.

It carries out the reaction (2S)-2-hydroxy-3-oxobutyl phosphate + 5-amino-6-(D-ribitylamino)uracil = 6,7-dimethyl-8-(1-D-ribityl)lumazine + phosphate + 2 H2O + H(+). It functions in the pathway cofactor biosynthesis; riboflavin biosynthesis; riboflavin from 2-hydroxy-3-oxobutyl phosphate and 5-amino-6-(D-ribitylamino)uracil: step 1/2. Functionally, catalyzes the formation of 6,7-dimethyl-8-ribityllumazine by condensation of 5-amino-6-(D-ribitylamino)uracil with 3,4-dihydroxy-2-butanone 4-phosphate. This is the penultimate step in the biosynthesis of riboflavin. In Polynucleobacter necessarius subsp. necessarius (strain STIR1), this protein is 6,7-dimethyl-8-ribityllumazine synthase.